A 530-amino-acid polypeptide reads, in one-letter code: Glucocorticoid modulatory element-binding protein 2 (530 aa).

Residues 81-163 (EEGENLEAEI…RKIMDSGELD (83 aa)) form the SAND domain. Cys110 serves as a coordination point for Zn(2+). DNA is bound by residues Lys136, Lys140, Lys143, and Arg154. A Glycyl lysine isopeptide (Lys-Gly) (interchain with G-Cter in SUMO1); alternate cross-link involves residue Lys155. Lys155 is covalently cross-linked (Glycyl lysine isopeptide (Lys-Gly) (interchain with G-Cter in SUMO2); alternate). Positions 167, 171, and 175 each coordinate Zn(2+). Coiled coils occupy residues 245-270 (LLDE…RVQD) and 304-344 (QMDR…SNVL). Residue Ser373 is modified to Phosphoserine.

Homodimer, and heterodimer of GMEB1 and GMEB2. Interacts with the glucocorticoid receptor (NR3C1). May interact with CREB-binding protein (CBP).

Its subcellular location is the nucleus. It localises to the cytoplasm. Trans-acting factor that binds to glucocorticoid modulatory elements (GME) present in the TAT (tyrosine aminotransferase) promoter and increases sensitivity to low concentrations of glucocorticoids. Also binds to the transferrin receptor promoter. The chain is Glucocorticoid modulatory element-binding protein 2 (Gmeb2) from Mus musculus (Mouse).